Consider the following 552-residue polypeptide: Probable protein kinase UbiB (552 aa).

Residues 121 to 504 (HFDTVPLASA…QGLQRRVVNA (384 aa)) form the Protein kinase domain. ATP contacts are provided by residues 127–135 (LASASISQV) and K149. D284 acts as the Proton acceptor in catalysis. 2 helical membrane passes run 501–521 (VVNA…YGLH) and 530–550 (IPVW…SAWW).

Belongs to the ABC1 family. UbiB subfamily.

The protein localises to the cell inner membrane. The protein operates within cofactor biosynthesis; ubiquinone biosynthesis [regulation]. Is probably a protein kinase regulator of UbiI activity which is involved in aerobic coenzyme Q (ubiquinone) biosynthesis. This chain is Probable protein kinase UbiB, found in Xylella fastidiosa (strain M12).